Here is a 966-residue protein sequence, read N- to C-terminus: Valine--tRNA ligase (966 aa).

A 'HIGH' region motif is present at residues 48-58 (PNITGGLHLGH). A coiled-coil region spans residues 348-368 (DYKDARKKIIEECKRLKILED). Residues 566 to 570 (KMSKS) carry the 'KMSKS' region motif. Lys-569 is a binding site for ATP. Residues 939 to 960 (FKKSQEKLNHYNKTKNKLLNQY) are a coiled coil.

The protein belongs to the class-I aminoacyl-tRNA synthetase family. ValS type 1 subfamily. Monomer.

The protein resides in the cytoplasm. The enzyme catalyses tRNA(Val) + L-valine + ATP = L-valyl-tRNA(Val) + AMP + diphosphate. In terms of biological role, catalyzes the attachment of valine to tRNA(Val). As ValRS can inadvertently accommodate and process structurally similar amino acids such as threonine, to avoid such errors, it has a 'posttransfer' editing activity that hydrolyzes mischarged Thr-tRNA(Val) in a tRNA-dependent manner. In Blochmanniella floridana, this protein is Valine--tRNA ligase.